The following is a 158-amino-acid chain: Pyruvoyl-dependent arginine decarboxylase (158 aa).

Position 44 is a pyruvic acid (Ser) (serine 44).

Belongs to the PdaD family. Pyruvate is required as a cofactor.

It catalyses the reaction L-arginine + H(+) = agmatine + CO2. The chain is Pyruvoyl-dependent arginine decarboxylase from Thermococcus sibiricus (strain DSM 12597 / MM 739).